Here is a 232-residue protein sequence, read N- to C-terminus: Orotate phosphoribosyltransferase (232 aa).

Residues Arg107, Lys108, Lys111, His113, and 133-141 (EDLTTAGGS) each bind 5-phospho-alpha-D-ribose 1-diphosphate. Thr137 contributes to the orotate binding site.

The protein belongs to the purine/pyrimidine phosphoribosyltransferase family. PyrE subfamily. In terms of assembly, homodimer. The cofactor is Mg(2+).

It catalyses the reaction orotidine 5'-phosphate + diphosphate = orotate + 5-phospho-alpha-D-ribose 1-diphosphate. It functions in the pathway pyrimidine metabolism; UMP biosynthesis via de novo pathway; UMP from orotate: step 1/2. In terms of biological role, catalyzes the transfer of a ribosyl phosphate group from 5-phosphoribose 1-diphosphate to orotate, leading to the formation of orotidine monophosphate (OMP). The sequence is that of Orotate phosphoribosyltransferase from Agrobacterium fabrum (strain C58 / ATCC 33970) (Agrobacterium tumefaciens (strain C58)).